Here is a 322-residue protein sequence, read N- to C-terminus: Lipoyl synthase 2 (322 aa).

The disordered stretch occupies residues 1-36; the sequence is MKVILDLLNNDPRTTQRTERPRHPEKANRPDTPMES. Residues 14 to 34 are compositionally biased toward basic and acidic residues; the sequence is TTQRTERPRHPEKANRPDTPM. [4Fe-4S] cluster contacts are provided by Cys67, Cys72, Cys78, Cys93, Cys97, Cys100, and Ser306. Residues 79–295 enclose the Radical SAM core domain; sequence WAKKHATFMI…EKTAYAKGFL (217 aa).

Belongs to the radical SAM superfamily. Lipoyl synthase family. [4Fe-4S] cluster serves as cofactor.

The protein resides in the cytoplasm. The enzyme catalyses [[Fe-S] cluster scaffold protein carrying a second [4Fe-4S](2+) cluster] + N(6)-octanoyl-L-lysyl-[protein] + 2 oxidized [2Fe-2S]-[ferredoxin] + 2 S-adenosyl-L-methionine + 4 H(+) = [[Fe-S] cluster scaffold protein] + N(6)-[(R)-dihydrolipoyl]-L-lysyl-[protein] + 4 Fe(3+) + 2 hydrogen sulfide + 2 5'-deoxyadenosine + 2 L-methionine + 2 reduced [2Fe-2S]-[ferredoxin]. Its pathway is protein modification; protein lipoylation via endogenous pathway; protein N(6)-(lipoyl)lysine from octanoyl-[acyl-carrier-protein]: step 2/2. Functionally, catalyzes the radical-mediated insertion of two sulfur atoms into the C-6 and C-8 positions of the octanoyl moiety bound to the lipoyl domains of lipoate-dependent enzymes, thereby converting the octanoylated domains into lipoylated derivatives. The chain is Lipoyl synthase 2 from Bradyrhizobium diazoefficiens (strain JCM 10833 / BCRC 13528 / IAM 13628 / NBRC 14792 / USDA 110).